The chain runs to 119 residues: Large ribosomal subunit protein bL12 (119 aa).

This sequence belongs to the bacterial ribosomal protein bL12 family. In terms of assembly, homodimer. Part of the ribosomal stalk of the 50S ribosomal subunit. Forms a multimeric L10(L12)X complex, where L10 forms an elongated spine to which 2 to 4 L12 dimers bind in a sequential fashion. Binds GTP-bound translation factors.

Functionally, forms part of the ribosomal stalk which helps the ribosome interact with GTP-bound translation factors. Is thus essential for accurate translation. The chain is Large ribosomal subunit protein bL12 from Lysinibacillus sphaericus (strain C3-41).